Reading from the N-terminus, the 372-residue chain is Envelope phospholipase OPG057 (372 aa).

Residues 153–156 (YPPL) carry the YPPL motif. S-palmitoyl cysteine; by host attachment occurs at residues Cys-185 and Cys-186. In terms of domain architecture, PLD phosphodiesterase spans 307 to 334 (FTIQNNTKLLIVDDEYVHITSANFDGTH).

Belongs to the orthopoxvirus OPG057 family. Interacts with protein OPG190. In terms of processing, palmitoylated. Attachment of the palmitate moiety is essential for correct intracellular targeting and protein function.

The protein resides in the virion membrane. The protein localises to the host Golgi apparatus. It localises to the host trans-Golgi network. Its subcellular location is the host endoplasmic reticulum membrane. It catalyses the reaction a 1,2-diacyl-sn-glycero-3-phosphocholine + H2O = a 1,2-diacyl-sn-glycero-3-phosphate + choline + H(+). Its function is as follows. Major envelope protein that plays a role in the biogenesis of the viral double membrane and in egress of virus from the host cell. Produces the wrapped form of virus that is required for cell-to-cell spread. Acts as a lipase with broad specificity including phospholipase C, phospholipase A, and triacylglycerol lipase activities. The chain is Envelope phospholipase OPG057 (OPG057) from Homo sapiens (Human).